A 388-amino-acid chain; its full sequence is Chalcone synthase D (388 aa).

Cys-164 is an active-site residue.

It belongs to the thiolase-like superfamily. Chalcone/stilbene synthases family.

It catalyses the reaction (E)-4-coumaroyl-CoA + 3 malonyl-CoA + 3 H(+) = 2',4,4',6'-tetrahydroxychalcone + 3 CO2 + 4 CoA. Its pathway is secondary metabolite biosynthesis; flavonoid biosynthesis. Its function is as follows. The primary product of this enzyme is 4,2',4',6'-tetrahydroxychalcone (also termed naringenin-chalcone or chalcone) which can under specific conditions spontaneously isomerize into naringenin. This chain is Chalcone synthase D (CHSD), found in Ipomoea nil (Japanese morning glory).